The primary structure comprises 63 residues: Large ribosomal subunit protein uL29 (63 aa).

This sequence belongs to the universal ribosomal protein uL29 family.

This chain is Large ribosomal subunit protein uL29, found in Psychromonas ingrahamii (strain DSM 17664 / CCUG 51855 / 37).